A 428-amino-acid polypeptide reads, in one-letter code: L-glutamyl-[BtrI acyl-carrier protein] decarboxylase (428 aa).

Lys49 carries the post-translational modification N6-(pyridoxal phosphate)lysine. Residues Gly228, 269 to 272 (ESGR), and Tyr375 each bind pyridoxal 5'-phosphate. Substrate-binding residues include Arg272 and Tyr375.

It belongs to the Orn/Lys/Arg decarboxylase class-II family. In terms of assembly, homodimer. Pyridoxal 5'-phosphate serves as cofactor.

It carries out the reaction gamma-L-glutamyl-[BtrI ACP] + H(+) = 4-aminobutanoyl-[BtrI ACP] + CO2. It participates in antibiotic biosynthesis; butirosin biosynthesis. Functionally, pyridoxal phosphate-dependent decarboxylase that catalyzes 1 step in the biosynthesis of the side chain of the aminoglycoside antibiotics in the biosynthetic pathway of butirosin. Able to decarboxylate L-ornithine, L-arginine, L-lysine, but not L-glutamate or any D-amino acids. Has low activity with substrates not bound to an acyl-carrier protein. This chain is L-glutamyl-[BtrI acyl-carrier protein] decarboxylase (btrK), found in Niallia circulans (Bacillus circulans).